We begin with the raw amino-acid sequence, 499 residues long: Apolipoprotein N-acyltransferase (499 aa).

6 helical membrane passes run 9 to 29 (LLLG…PALL), 50 to 70 (LGYI…SIGV), 77 to 97 (FWWA…FFVS), 114 to 134 (FIFC…FTGL), 148 to 168 (ILIQ…VIYI), and 183 to 203 (LKVL…YGSV). Residues 220-464 (VQPSIPQTEK…DGLIPKKLDS (245 aa)) form the CN hydrolase domain. The active-site Proton acceptor is glutamate 259. The active site involves lysine 322. Residue cysteine 372 is the Nucleophile of the active site. A helical transmembrane segment spans residues 466–486 (TIFSKFGNITILLIVFFIFLV).

The protein belongs to the CN hydrolase family. Apolipoprotein N-acyltransferase subfamily.

The protein localises to the cell inner membrane. It catalyses the reaction N-terminal S-1,2-diacyl-sn-glyceryl-L-cysteinyl-[lipoprotein] + a glycerophospholipid = N-acyl-S-1,2-diacyl-sn-glyceryl-L-cysteinyl-[lipoprotein] + a 2-acyl-sn-glycero-3-phospholipid + H(+). It functions in the pathway protein modification; lipoprotein biosynthesis (N-acyl transfer). Catalyzes the phospholipid dependent N-acylation of the N-terminal cysteine of apolipoprotein, the last step in lipoprotein maturation. This Rickettsia bellii (strain RML369-C) protein is Apolipoprotein N-acyltransferase.